Consider the following 479-residue polypeptide: Ribulose bisphosphate carboxylase large chain (479 aa).

Positions 1–2 (MS) are excised as a propeptide. Proline 3 is modified (N-acetylproline). Positions 123 and 173 each coordinate substrate. Lysine 175 serves as the catalytic Proton acceptor. Lysine 177 lines the substrate pocket. 3 residues coordinate Mg(2+): lysine 201, aspartate 203, and glutamate 204. Residue lysine 201 is modified to N6-carboxylysine. The active-site Proton acceptor is the histidine 294. The substrate site is built by arginine 295, histidine 327, and serine 379.

It belongs to the RuBisCO large chain family. Type I subfamily. As to quaternary structure, heterohexadecamer of 8 large chains and 8 small chains; disulfide-linked. The disulfide link is formed within the large subunit homodimers. The cofactor is Mg(2+). In terms of processing, the disulfide bond which can form in the large chain dimeric partners within the hexadecamer appears to be associated with oxidative stress and protein turnover.

The protein localises to the plastid. Its subcellular location is the chloroplast. The catalysed reaction is 2 (2R)-3-phosphoglycerate + 2 H(+) = D-ribulose 1,5-bisphosphate + CO2 + H2O. It carries out the reaction D-ribulose 1,5-bisphosphate + O2 = 2-phosphoglycolate + (2R)-3-phosphoglycerate + 2 H(+). Functionally, ruBisCO catalyzes two reactions: the carboxylation of D-ribulose 1,5-bisphosphate, the primary event in carbon dioxide fixation, as well as the oxidative fragmentation of the pentose substrate in the photorespiration process. Both reactions occur simultaneously and in competition at the same active site. The chain is Ribulose bisphosphate carboxylase large chain from Hordeum vulgare (Barley).